We begin with the raw amino-acid sequence, 490 residues long: Acetyl-coenzyme A carboxylase carboxyl transferase subunit beta, chloroplastic (490 aa).

Positions 184–203 (LNSSENEGSSRRTRTKGSDL) are disordered. In terms of domain architecture, CoA carboxyltransferase N-terminal spans 221 to 490 (LWVQCENCYG…PLNQKSSKIK (270 aa)). The Zn(2+) site is built by Cys225, Cys228, Cys244, and Cys247. A C4-type zinc finger spans residues 225–247 (CENCYGLNYKKFLKSKMNICEQC).

Belongs to the AccD/PCCB family. Acetyl-CoA carboxylase is a heterohexamer composed of biotin carboxyl carrier protein, biotin carboxylase and 2 subunits each of ACCase subunit alpha and ACCase plastid-coded subunit beta (accD). It depends on Zn(2+) as a cofactor. In terms of tissue distribution, RNA expressed in leaf, root, stem, and tuber; the least expression occurs in stems. RNA persists even in senescent leaves.

The protein resides in the plastid. Its subcellular location is the chloroplast stroma. It carries out the reaction N(6)-carboxybiotinyl-L-lysyl-[protein] + acetyl-CoA = N(6)-biotinyl-L-lysyl-[protein] + malonyl-CoA. Its pathway is lipid metabolism; malonyl-CoA biosynthesis; malonyl-CoA from acetyl-CoA: step 1/1. Its function is as follows. Component of the acetyl coenzyme A carboxylase (ACC) complex. Biotin carboxylase (BC) catalyzes the carboxylation of biotin on its carrier protein (BCCP) and then the CO(2) group is transferred by the transcarboxylase to acetyl-CoA to form malonyl-CoA. The polypeptide is Acetyl-coenzyme A carboxylase carboxyl transferase subunit beta, chloroplastic (Solanum tuberosum (Potato)).